The sequence spans 382 residues: Bestrophin-6 (382 aa).

4 helical membrane-spanning segments follow: residues Trp29–Ile49, Phe68–Val88, Leu231–Ala251, and Val265–Leu285.

This sequence belongs to the anion channel-forming bestrophin (TC 1.A.46) family. Calcium-sensitive chloride channel subfamily.

It is found in the membrane. The sequence is that of Bestrophin-6 (best-6) from Caenorhabditis elegans.